We begin with the raw amino-acid sequence, 388 residues long: Probable peptidoglycan glycosyltransferase FtsW (388 aa).

Residues Met-1 to Thr-19 lie on the Cytoplasmic side of the membrane. The helical transmembrane segment at Leu-20–Met-40 threads the bilayer. Topologically, residues His-41–Gln-57 are periplasmic. The chain crosses the membrane as a helical span at residues Leu-58–Tyr-78. At Trp-79–Pro-85 the chain is on the cytoplasmic side. A helical membrane pass occupies residues Leu-86 to Val-106. Topologically, residues Asn-107–Gly-117 are periplasmic. A helical membrane pass occupies residues Leu-118–Tyr-137. The Cytoplasmic portion of the chain corresponds to Ile-138–His-147. Residues Ser-148 to Leu-168 traverse the membrane as a helical segment. Over Glu-169–Pro-170 the chain is Periplasmic. The chain crosses the membrane as a helical span at residues Asp-171 to Ala-191. Arg-192 is a topological domain (cytoplasmic). A helical membrane pass occupies residues Leu-193–Ser-213. Over Ala-214 to Asp-271 the chain is Periplasmic. A helical membrane pass occupies residues Phe-272–Leu-292. The Cytoplasmic segment spans residues Phe-293–Ser-315. A helical membrane pass occupies residues Ala-316–Val-336. Residues Asn-337–Leu-348 are Periplasmic-facing. Residues Pro-349–Phe-369 form a helical membrane-spanning segment. The Cytoplasmic portion of the chain corresponds to Arg-370–Arg-388.

Belongs to the SEDS family. FtsW subfamily.

The protein localises to the cell inner membrane. The enzyme catalyses [GlcNAc-(1-&gt;4)-Mur2Ac(oyl-L-Ala-gamma-D-Glu-L-Lys-D-Ala-D-Ala)](n)-di-trans,octa-cis-undecaprenyl diphosphate + beta-D-GlcNAc-(1-&gt;4)-Mur2Ac(oyl-L-Ala-gamma-D-Glu-L-Lys-D-Ala-D-Ala)-di-trans,octa-cis-undecaprenyl diphosphate = [GlcNAc-(1-&gt;4)-Mur2Ac(oyl-L-Ala-gamma-D-Glu-L-Lys-D-Ala-D-Ala)](n+1)-di-trans,octa-cis-undecaprenyl diphosphate + di-trans,octa-cis-undecaprenyl diphosphate + H(+). It participates in cell wall biogenesis; peptidoglycan biosynthesis. Functionally, peptidoglycan polymerase that is essential for cell division. The protein is Probable peptidoglycan glycosyltransferase FtsW of Methylomonas methanica (strain DSM 25384 / MC09).